A 267-amino-acid chain; its full sequence is Mediator of RNA polymerase II transcription subunit 18 (267 aa).

Belongs to the Mediator complex subunit 18 family. Component of the Mediator complex.

It localises to the nucleus. Its function is as follows. Component of the Mediator complex, a coactivator involved in the regulated transcription of nearly all RNA polymerase II-dependent genes. Mediator functions as a bridge to convey information from gene-specific regulatory proteins to the basal RNA polymerase II transcription machinery. Mediator is recruited to promoters by direct interactions with regulatory proteins and serves as a scaffold for the assembly of a functional preinitiation complex with RNA polymerase II and the general transcription factors. This chain is Mediator of RNA polymerase II transcription subunit 18 (SRB5), found in Coccidioides immitis (strain RS) (Valley fever fungus).